The chain runs to 884 residues: Schlafen family member 5 (884 aa).

574-581 (GLPGSGKT) lines the ATP pocket.

The protein belongs to the Schlafen family. Subgroup III subfamily.

May have a role in hematopoietic cell differentiation. In Mus musculus (Mouse), this protein is Schlafen family member 5 (Slfn5).